We begin with the raw amino-acid sequence, 200 residues long: Large ribosomal subunit protein uL4 (200 aa).

The tract at residues 42-65 (TRAQKTRSEVSGGGAKPWRQKGTG) is disordered.

The protein belongs to the universal ribosomal protein uL4 family. As to quaternary structure, part of the 50S ribosomal subunit.

One of the primary rRNA binding proteins, this protein initially binds near the 5'-end of the 23S rRNA. It is important during the early stages of 50S assembly. It makes multiple contacts with different domains of the 23S rRNA in the assembled 50S subunit and ribosome. Functionally, forms part of the polypeptide exit tunnel. The polypeptide is Large ribosomal subunit protein uL4 (Vibrio atlanticus (strain LGP32) (Vibrio splendidus (strain Mel32))).